The chain runs to 726 residues: WD repeat and coiled-coil-containing protein (726 aa).

WD repeat units lie at residues 55–98 (GQFE…LDKN) and 154–194 (KSSG…LNAC). Residues 503–571 (SYDGDQSPTS…SSPPNFIKHG (69 aa)) form a disordered region. Residues 506-515 (GDQSPTSSAN) show a composition bias toward polar residues. Over residues 517-535 (FDDKRSKLRVESLDTEPKN) the composition is skewed to basic and acidic residues. Residues 550–565 (SRPTSPKSECQKSSPP) show a composition bias toward polar residues. Residues 581–609 (SISRNVERLCCNFAHLQQHLSELTDITRN) are a coiled coil.

In Xenopus tropicalis (Western clawed frog), this protein is WD repeat and coiled-coil-containing protein (wdcp).